We begin with the raw amino-acid sequence, 212 residues long: Putative 3-methyladenine DNA glycosylase (212 aa).

Belongs to the DNA glycosylase MPG family.

This is Putative 3-methyladenine DNA glycosylase from Nocardia farcinica (strain IFM 10152).